The following is a 237-amino-acid chain: Phosphoribosylaminoimidazole-succinocarboxamide synthase (237 aa).

It belongs to the SAICAR synthetase family.

It carries out the reaction 5-amino-1-(5-phospho-D-ribosyl)imidazole-4-carboxylate + L-aspartate + ATP = (2S)-2-[5-amino-1-(5-phospho-beta-D-ribosyl)imidazole-4-carboxamido]succinate + ADP + phosphate + 2 H(+). Its pathway is purine metabolism; IMP biosynthesis via de novo pathway; 5-amino-1-(5-phospho-D-ribosyl)imidazole-4-carboxamide from 5-amino-1-(5-phospho-D-ribosyl)imidazole-4-carboxylate: step 1/2. This is Phosphoribosylaminoimidazole-succinocarboxamide synthase from Baumannia cicadellinicola subsp. Homalodisca coagulata.